The sequence spans 299 residues: Inosose dehydratase (299 aa).

This sequence belongs to the IolE/MocC family. It depends on glutathione as a cofactor. Requires Co(2+) as cofactor. Mn(2+) serves as cofactor.

The enzyme catalyses scyllo-inosose = 3D-3,5/4-trihydroxycyclohexane-1,2-dione + H2O. In terms of biological role, catalyzes the dehydration of inosose (2-keto-myo-inositol, 2KMI or 2,4,6/3,5-pentahydroxycyclohexanone) to 3D-(3,5/4)-trihydroxycyclohexane-1,2-dione (D-2,3-diketo-4-deoxy-epi-inositol). The sequence is that of Inosose dehydratase from Klebsiella pneumoniae (strain 342).